The following is a 378-amino-acid chain: D-alanine--D-alanine ligase (378 aa).

Residues 149–374 (KVLLAAAGIP…YTDLITKLIE (226 aa)) enclose the ATP-grasp domain. 189–247 (EAGLQYPLFVKPSRAGSSFGVTKVEHEGDAAELAAAVYEASRHDWRILVEQGIDAREIE) serves as a coordination point for ATP. Residues Asp-328, Glu-341, and Asn-343 each contribute to the Mg(2+) site.

It belongs to the D-alanine--D-alanine ligase family. It depends on Mg(2+) as a cofactor. The cofactor is Mn(2+).

It is found in the cytoplasm. It carries out the reaction 2 D-alanine + ATP = D-alanyl-D-alanine + ADP + phosphate + H(+). Its pathway is cell wall biogenesis; peptidoglycan biosynthesis. Functionally, cell wall formation. The polypeptide is D-alanine--D-alanine ligase (Bifidobacterium adolescentis (strain ATCC 15703 / DSM 20083 / NCTC 11814 / E194a)).